Reading from the N-terminus, the 220-residue chain is Small ribosomal subunit protein uS3 (220 aa).

The region spanning 43–111 is the KH type-2 domain; that stretch reads IRSYLTKTLD…QVQLNILEVK (69 aa).

Belongs to the universal ribosomal protein uS3 family. Part of the 30S ribosomal subunit. Forms a tight complex with proteins S10 and S14.

Its function is as follows. Binds the lower part of the 30S subunit head. Binds mRNA in the 70S ribosome, positioning it for translation. In Tropheryma whipplei (strain TW08/27) (Whipple's bacillus), this protein is Small ribosomal subunit protein uS3.